Consider the following 370-residue polypeptide: Chloromuconate cycloisomerase (370 aa).

The active-site Proton acceptor is Lys-165. The Mn(2+) site is built by Asp-194, Glu-220, and Asp-245. Catalysis depends on Glu-323, which acts as the Proton donor.

The protein belongs to the mandelate racemase/muconate lactonizing enzyme family. Requires Mn(2+) as cofactor.

It catalyses the reaction 2-[(2R)-2-chloro-2,5-dihydro-5-oxofuryl]acetate = 3-chloro-cis,cis-muconate + H(+). Its pathway is aromatic compound metabolism; 3-chlorocatechol degradation. This chain is Chloromuconate cycloisomerase (tfdDI), found in Cupriavidus pinatubonensis (strain JMP 134 / LMG 1197) (Cupriavidus necator (strain JMP 134)).